Consider the following 377-residue polypeptide: N-acetylgalactosamine-6-phosphate deacetylase (377 aa).

Residue E125 participates in a divalent metal cation binding. 136–137 serves as a coordination point for substrate; sequence AH. 2 residues coordinate a divalent metal cation: H191 and H212. Residues 215-216, R223, and 244-247 contribute to the substrate site; these read NG and DGHH. The active-site Proton donor/acceptor is D269. 302–304 is a substrate binding site; it reads LAG.

It belongs to the metallo-dependent hydrolases superfamily. NagA family. It depends on a divalent metal cation as a cofactor.

It carries out the reaction N-acetyl-D-galactosamine 6-phosphate + H2O = D-galactosamine 6-phosphate + acetate. Catalyzes the deacetylation of N-acetyl-D-galactosamine 6-phosphate to D-galactosamine 6-phosphate. Can probably also catalyze the deacetylation of N-acetyl-D-glucosamine 6-phosphate to D-glucosamine 6-phosphate. The protein is N-acetylgalactosamine-6-phosphate deacetylase (agaA) of Escherichia coli O157:H7.